The sequence spans 571 residues: MGRAGGGGPGWGPPPVLLLLGVTLVLTAGAVPAREAGSAIEAEELVRSGLAWESRANDTREEAGLPAAGEDETSWTERGSELAAVGPGVGPEETLEASAAVTGTAWLEADGTGLGGVTAEAGSGDAQTLPATLQAPDEALGSSTMPPAIPEATEASGPPSPTLRDKPSLVPELPKEIPLEVWLNLGGSTPDPQRPEPTFPLQGTLETQPASDIIDIDYFEGLDSEGRGTDMGRFPGSPGTSENHPDTEGETPSWSLLDLYDDFTPFDESDFYPTTSFYDDLEEEEEEEEDKDAVGGGDLEDESDLLLPSQKPGVGPGTGQPTSRWHAVPPQHTLGMVPGGSISLRPRPGDPGKDLATSENGTECRVGFVRHNGSCRSVCDLFPSYCHNGGQCYLVENIGAFCRCNTQDYIWHKGMRCESIITDFQVMCVAVGSAALVLLLLFMMTVFFAKKLYLLKTENTKLRRTNKFRTPSELHNDNFSLSTIAEGSHPNVRKLCDTPCVSSPHARALAHCDNIVCQDDPSAPHKIQEALKSRLKEEESFNIQNSMSPKLEGGKGDQDDLEVNCLQNNLT.

A signal peptide spans 1-30 (MGRAGGGGPGWGPPPVLLLLGVTLVLTAGA). Residues 31 to 428 (VPAREAGSAI…SIITDFQVMC (398 aa)) lie on the Extracellular side of the membrane. The O-linked (Xyl...) (chondroitin sulfate) serine glycan is linked to S38. N57 is a glycosylation site (N-linked (GlcNAc...) asparagine). Positions 57-91 (NDTREEAGLPAAGEDETSWTERGSELAAVGPGVGP) are disordered. T76 is a glycosylation site (O-linked (GalNAc...) threonine). O-linked (Xyl...) (chondroitin sulfate) serine glycosylation occurs at S123. An O-linked (GalNAc...) threonine glycan is attached at T132. Disordered stretches follow at residues 137-169 (DEAL…KPSL), 186-254 (GGST…TPSW), and 279-357 (DDLE…DLAT). S143 carries O-linked (GalNAc...) serine glycosylation. O-linked (GalNAc...) threonine glycosylation is found at T144 and T153. 2 O-linked (GalNAc...) serine glycosylation sites follow: S156 and S160. O-linked (GalNAc...) threonine glycans are attached at residues T162 and T198. The segment covering 214–223 (IDIDYFEGLD) has biased composition (acidic residues). O-linked (GalNAc...) threonine glycosylation is present at T240. Residues 270–306 (DFYPTTSFYDDLEEEEEEEEDKDAVGGGDLEDESDLL) are interaction with TNC and TNR. Over residues 279 to 291 (DDLEEEEEEEEDK) the composition is skewed to acidic residues. T318 and T322 each carry an O-linked (GalNAc...) threonine glycan. N-linked (GlcNAc...) asparagine glycosylation occurs at N372. One can recognise an EGF-like domain in the interval 376–418 (RSVCDLFPSYCHNGGQCYLVENIGAFCRCNTQDYIWHKGMRCE). Disulfide bonds link C379-C392, C386-C402, and C404-C417. The helical transmembrane segment at 429–449 (VAVGSAALVLLLLFMMTVFFA) threads the bilayer. The interval 447-465 (FFAKKLYLLKTENTKLRRT) is interaction with GOPC. Residues 450–571 (KKLYLLKTEN…EVNCLQNNLT (122 aa)) are Cytoplasmic-facing. 4 positions are modified to phosphoserine: S472, S480, S488, and S548. Residues 538-563 (EESFNIQNSMSPKLEGGKGDQDDLEV) are disordered.

Interacts with ERBB3 and GOPC. Binds TNR and probably TNC. Interacts with MDK; this interaction is independent of the presence of chondroitin sulfate chains and promotes elongation of oligodendroglial precursor-like cells. In terms of processing, N-glycosylated. Post-translationally, O-glycosylated; contains chondroitin sulfate glycans. Part-time proteoglycan, expressed in part as a proteoglycan exhibiting chondroitin sulfate glycans and in part as a non-proteoglycan form. The relative amount of both forms depends on tissues and tissue maturation. Phosphorylated; in intracellular and extracellular parts. In terms of tissue distribution, expressed in cerebral cortex and cerebellum. Expressed in retina (at protein level).

The protein resides in the cell membrane. The protein localises to the synaptic cell membrane. Its subcellular location is the endoplasmic reticulum membrane. It localises to the golgi apparatus membrane. It is found in the cell surface. The protein resides in the secreted. Functionally, may function as a growth and differentiation factor involved in neuritogenesis. May induce ERBB3 activation. The chain is Chondroitin sulfate proteoglycan 5 (Cspg5) from Rattus norvegicus (Rat).